The sequence spans 354 residues: Ion-translocating oxidoreductase complex subunit D (354 aa).

Helical transmembrane passes span 19–39, 40–60, 70–89, 94–116, and 123–143; these read IMLWVILAMLPAIFAQLYYFG, FGVLFQITIAVVFALCLEFLV, FYISDFSVTLTALILAVAIP, YWIILIGIFCAVILGKHVYGGLG, and AMVGYVVLLVSFPMQMTTWLA. The residue at position 186 (threonine 186) is an FMN phosphoryl threonine. A run of 5 helical transmembrane segments spans residues 215-235, 242-262, 266-286, 300-320, and 321-341; these read LAGLGWFQVNLAFLLGGLFLV, WQIPTALLITVCLFSLCSWLF, MPSPLWQLFSGATMFCAFFIA, LVFGVLVGLLLCLIRFYGGYP, and DGAAFAILLANICVPLIDQYT.

This sequence belongs to the NqrB/RnfD family. The complex is composed of six subunits: RnfA, RnfB, RnfC, RnfD, RnfE and RnfG. The cofactor is FMN.

It localises to the cell inner membrane. In terms of biological role, part of a membrane-bound complex that couples electron transfer with translocation of ions across the membrane. The polypeptide is Ion-translocating oxidoreductase complex subunit D (Mannheimia succiniciproducens (strain KCTC 0769BP / MBEL55E)).